The chain runs to 342 residues: Pre-mRNA-splicing factor 18 (342 aa).

Position 1 is an N-acetylmethionine (Met1).

Belongs to the PRP18 family. In terms of assembly, heterodimer with PPIH. Interacts with PRPF4 and with the spliceosome. Part of a complex containing U4/U6 snRNPs.

The protein resides in the nucleus speckle. Participates in the second step of pre-mRNA splicing. This chain is Pre-mRNA-splicing factor 18 (PRPF18), found in Pongo abelii (Sumatran orangutan).